A 74-amino-acid polypeptide reads, in one-letter code: MCIAQYIYVRLAVNLPTPETYDELQRAYDFFNEKLFSNELPPCLITLQREKRTYGYCSFKRFVGRESGYTVDEI.

This is an uncharacterized protein from Salmonella typhimurium.